Here is a 453-residue protein sequence, read N- to C-terminus: Prenyltransferase nscD (453 aa).

Dimethylallyl diphosphate-binding residues include Arg-118, Lys-200, Tyr-202, Lys-271, Tyr-273, and Tyr-428.

Belongs to the tryptophan dimethylallyltransferase family.

It participates in secondary metabolite biosynthesis. Its function is as follows. Prenyltransferase; part of the gene cluster that mediates the biosynthesis of neosartoricin, a prenylated anthracenone that exhibits T-cell antiproliferative activity, suggestive of a physiological role as an immunosuppressive agent. The non-reducing polyketide synthase nscA probably synthesizes and cyclizes the decaketide backbone. The hydrolase nscB then mediates the product release through hydrolysis followed by spontaneous decarboxylation. The prenyltransferase nscD catalyzes the addition of the dimethylallyl group to the aromatic C5. The FAD-dependent monooxygenase nscC is then responsible for the stereospecific hydroxylation at C2. There is no gene encoding O-acetyltransferase in the nsc gene cluster; thus, the last step of 2-O-acetylation leading to neosartoricin may be catalyzed by an unidentified O-acetyltransferase. The sequence is that of Prenyltransferase nscD from Aspergillus fumigatus (strain ATCC MYA-4609 / CBS 101355 / FGSC A1100 / Af293) (Neosartorya fumigata).